A 146-amino-acid chain; its full sequence is 3-hydroxyacyl-[acyl-carrier-protein] dehydratase FabZ (146 aa).

His-49 is an active-site residue.

This sequence belongs to the thioester dehydratase family. FabZ subfamily.

It is found in the cytoplasm. It catalyses the reaction a (3R)-hydroxyacyl-[ACP] = a (2E)-enoyl-[ACP] + H2O. Its function is as follows. Involved in unsaturated fatty acids biosynthesis. Catalyzes the dehydration of short chain beta-hydroxyacyl-ACPs and long chain saturated and unsaturated beta-hydroxyacyl-ACPs. This chain is 3-hydroxyacyl-[acyl-carrier-protein] dehydratase FabZ, found in Pseudomonas aeruginosa (strain LESB58).